Consider the following 459-residue polypeptide: Protein FAM90A27P (459 aa).

Residues 1–10 (MARHSVHHQA) are compositionally biased toward basic residues. 4 disordered regions span residues 1 to 41 (MARH…ESRV), 74 to 136 (SHKE…WKEP), 153 to 239 (HTTK…ALQP), and 259 to 459 (PDAD…SDSD). Residues 125-136 (PQEKMQEAWKEP) are compositionally biased toward basic and acidic residues. The span at 184 to 194 (HNDSPQLSTCG) shows a compositional bias: polar residues. Positions 341–353 (KATAETAATKTAT) are enriched in low complexity. Residues 415-427 (PPENSASAQSPRF) are compositionally biased toward polar residues.

This sequence belongs to the FAM90 family.

This Homo sapiens (Human) protein is Protein FAM90A27P (FAM90A27P).